We begin with the raw amino-acid sequence, 810 residues long: F-BAR domain only protein 2 (810 aa).

The region spanning Met3–Leu250 is the F-BAR domain. Residues Met3–Asp274 are mediates dimerization and binding to membranes enriched in Pi(4,5)-P2 and induces their tubulation. Positions His87–Glu156 form a coiled coil. A Glycyl lysine isopeptide (Lys-Gly) (interchain with G-Cter in SUMO2) cross-link involves residue Lys297. The disordered stretch occupies residues Asp301 to Pro352. Ser312 bears the Phosphoserine mark. Thr385 carries the post-translational modification Phosphothreonine. Phosphoserine occurs at positions 387, 394, and 403. Positions Ser403–Leu537 are disordered. Low complexity predominate over residues Pro433–Ser456. Ser488, Ser493, Ser496, Ser508, Ser510, Ser511, and Ser533 each carry phosphoserine. Positions Pro502–Ala521 are enriched in low complexity. A mediates interaction with DAB2, EPS15, EPS15R and ITSN1 region spans residues Ala521–Cys810. One can recognise an MHD domain in the interval Thr542–Asp809.

The protein belongs to the FCHO family. Homodimer; disulfide-linked. May form homotetramer. Interacts with AP2A1. Interacts with EPS15, EPS15R, ITSN1 and ITSN2; recruit those scaffolding proteins which in turn may interact with the adaptor protein complex AP-2 at the plasma membrane. Interacts with DAB2 (via DPF motifs); mediates LDL receptor/LDLR endocytosis. Post-translationally, ubiquitinated. Mainly undergoes monoubiquitination but also polyubiquitination.

It localises to the membrane. The protein localises to the clathrin-coated pit. Its function is as follows. Functions in an early step of clathrin-mediated endocytosis. Has both a membrane binding/bending activity and the ability to recruit proteins essential to the formation of functional clathrin-coated pits. Has a lipid-binding activity with a preference for membranes enriched in phosphatidylserine and phosphoinositides (Pi(4,5) biphosphate) like the plasma membrane. Its membrane-bending activity might be important for the subsequent action of clathrin and adaptors in the formation of clathrin-coated vesicles. Involved in adaptor protein complex AP-2-dependent endocytosis of the transferrin receptor, it also functions in the AP-2-independent endocytosis of the LDL receptor. The sequence is that of F-BAR domain only protein 2 (FCHO2) from Pongo abelii (Sumatran orangutan).